A 165-amino-acid polypeptide reads, in one-letter code: UPF0254 protein MmarC5_0742 (165 aa).

Belongs to the UPF0254 family.

This Methanococcus maripaludis (strain C5 / ATCC BAA-1333) protein is UPF0254 protein MmarC5_0742.